The primary structure comprises 116 residues: MAGFGLPNFGQLTEAFKKAKQIQQDAQKLQDELENMEIEGKSDDEMIKVWISGNQLPLKVEVQENIFNSNKEQIEKNILQAIKKAHELSTTTMKERMNDLTGGLNLNLPGFDNSDS.

It belongs to the YbaB/EbfC family. In terms of assembly, homodimer.

It is found in the cytoplasm. Its subcellular location is the nucleoid. Functionally, binds to DNA and alters its conformation. May be involved in regulation of gene expression, nucleoid organization and DNA protection. The polypeptide is Nucleoid-associated protein A9601_00191 (Prochlorococcus marinus (strain AS9601)).